We begin with the raw amino-acid sequence, 763 residues long: Nibrin (763 aa).

The FHA domain maps to 22 to 81 (YVVGRKNCAILIPEDQSISRCHATLSVSHPSANLGQTNAASVLSIKDSSKYGTTVNGDKM). BRCT domains lie at 102 to 179 (SKYR…CELL) and 215 to 324 (KRKS…NPRR). Disordered regions lie at residues 389 to 496 (VKET…SSQT), 535 to 593 (SKAA…SEIE), and 738 to 763 (QTQQVREESLAEDLFRYNPKPSKRRR). Residues 423 to 433 (LFREDETDTRK) show a composition bias toward basic and acidic residues. Positions 434 to 443 (NTPSLLPTKS) are enriched in polar residues. Positions 469-474 (AKKRDR) match the Nuclear localization signal motif. The segment covering 473 to 482 (DRAEDEKEAS) has biased composition (basic and acidic residues). The span at 742–752 (VREESLAEDLF) shows a compositional bias: basic and acidic residues. The short motif at 748-757 (AEDLFRYNPK) is the FxF/Y motif element.

Belongs to the Nibrin family. Component of the MRN complex composed of two heterodimers rad50 and mre11 associated with a single nbn.

The protein localises to the nucleus. It is found in the chromosome. The protein resides in the PML body. Its subcellular location is the telomere. Functionally, component of the MRN complex, which plays a central role in double-strand break (DSB) repair, DNA recombination, maintenance of telomere integrity and meiosis. The MRN complex is involved in the repair of DNA double-strand breaks (DSBs) via homologous recombination (HR), an error-free mechanism which primarily occurs during S and G2 phases. The complex (1) mediates the end resection of damaged DNA, which generates proper single-stranded DNA, a key initial steps in HR, and is (2) required for the recruitment of other repair factors and efficient activation of ATM and ATR upon DNA damage. The MRN complex possesses single-strand endonuclease activity and double-strand-specific 3'-5' exonuclease activity, which are provided by MRE11, to initiate end resection, which is required for single-strand invasion and recombination. Within the MRN complex, nbn acts as a protein-protein adapter, which specifically recognizes and binds phosphorylated proteins, promoting their recruitment to DNA damage sites. Recruits mre11 and rad50 components of the MRN complex to DSBs in response to DNA damage. Promotes the recruitment of PI3/PI4-kinase family members atm, atr, and probably DNA-PKcs to the DNA damage sites, activating their functions. Mediates the recruitment of phosphorylated rbbp8/CtIP to DSBs, leading to cooperation between the MRN complex and rbbp8/CtIP to initiate end resection. The MRN complex promotes recruitment of topbp1 to DNA damage sites. The MRN complex and rbbp8/CtIP are also required for chromosome alignment during metaphase. This chain is Nibrin, found in Xenopus laevis (African clawed frog).